Reading from the N-terminus, the 191-residue chain is UPF0312 protein Sputw3181_1309 (191 aa).

An N-terminal signal peptide occupies residues 1-22 (MKKQLLSALIGVSLLVPMAASA).

Belongs to the UPF0312 family. Type 1 subfamily.

Its subcellular location is the periplasm. This chain is UPF0312 protein Sputw3181_1309, found in Shewanella sp. (strain W3-18-1).